Consider the following 150-residue polypeptide: 6,7-dimethyl-8-ribityllumazine synthase (150 aa).

5-amino-6-(D-ribitylamino)uracil contacts are provided by residues Phe-11, 43–45, and 67–69; these read VYD and AVI. (2S)-2-hydroxy-3-oxobutyl phosphate is bound at residue 72-73; that stretch reads AT. Catalysis depends on His-75, which acts as the Proton donor. Leu-100 lines the 5-amino-6-(D-ribitylamino)uracil pocket. Arg-115 contacts (2S)-2-hydroxy-3-oxobutyl phosphate.

It belongs to the DMRL synthase family.

The catalysed reaction is (2S)-2-hydroxy-3-oxobutyl phosphate + 5-amino-6-(D-ribitylamino)uracil = 6,7-dimethyl-8-(1-D-ribityl)lumazine + phosphate + 2 H2O + H(+). Its pathway is cofactor biosynthesis; riboflavin biosynthesis; riboflavin from 2-hydroxy-3-oxobutyl phosphate and 5-amino-6-(D-ribitylamino)uracil: step 1/2. In terms of biological role, catalyzes the formation of 6,7-dimethyl-8-ribityllumazine by condensation of 5-amino-6-(D-ribitylamino)uracil with 3,4-dihydroxy-2-butanone 4-phosphate. This is the penultimate step in the biosynthesis of riboflavin. The sequence is that of 6,7-dimethyl-8-ribityllumazine synthase from Pyrobaculum aerophilum (strain ATCC 51768 / DSM 7523 / JCM 9630 / CIP 104966 / NBRC 100827 / IM2).